Consider the following 63-residue polypeptide: Large ribosomal subunit protein uL29 (63 aa).

This sequence belongs to the universal ribosomal protein uL29 family.

This chain is Large ribosomal subunit protein uL29, found in Vibrio cholerae serotype O1 (strain ATCC 39541 / Classical Ogawa 395 / O395).